Here is a 564-residue protein sequence, read N- to C-terminus: Hexose transporter HXT13 (564 aa).

Over 1–52 (MSSAQSSIDSDGDVRDADIHVAPPVEKEWSDGFDDNEVINGDNVEPPKRGLI) the chain is Cytoplasmic. The helical transmembrane segment at 53–73 (GYLVIYLLCYPISFGGFLPGW) threads the bilayer. Over 74-109 (DSGITAGFINMDNFKMNFGSYKHSTGEYYLSNVRMG) the chain is Extracellular. Residues 110–130 (LLVAMFSIGCAIGGLIFARLA) form a helical membrane-spanning segment. Topologically, residues 131–136 (DTLGRR) are cytoplasmic. Residues 137–157 (LAIVIVVLVYMVGAIIQISSN) form a helical membrane-spanning segment. Over 158–167 (HKWYQYFVGK) the chain is Extracellular. Residues 168–188 (IIYGLGAGGCSVLCPMLLSEI) form a helical membrane-spanning segment. Residues 189 to 194 (APTDLR) are Cytoplasmic-facing. A helical transmembrane segment spans residues 195–215 (GGLVSLYQLNMTFGIFLGYCS). At 216 to 229 (VYGTRKYDNTAQWR) the chain is on the extracellular side. Residues 230 to 250 (VPLGLCFLWALIIIIGMLLVP) traverse the membrane as a helical segment. The Cytoplasmic portion of the chain corresponds to 251-333 (ESPRYLIECE…VQTFLQLTGE (83 aa)). A helical membrane pass occupies residues 334 to 350 (NYFFFYGTTIFKSVGLT). At 351–356 (DGFETS) the chain is on the extracellular side. A helical membrane pass occupies residues 357 to 374 (IVLGTVNFFSTIIAVMVV). Residues 375-381 (DKIGRRK) lie on the Cytoplasmic side of the membrane. The chain crosses the membrane as a helical span at residues 382–402 (CLLFGAAGMMACMVIFASIGV). Over 403–424 (KCLYPHGQDGPSSKGAGNAMIV) the chain is Extracellular. The chain crosses the membrane as a helical span at residues 425–445 (FTCFYIFCFATTWAPVAYIVV). Residues 446-462 (AESFPSKVKSRAMSIST) are Cytoplasmic-facing. The helical transmembrane segment at 463–483 (ACNWLWQFLIGFFTPFITGSI) threads the bilayer. His-484 is a topological domain (extracellular). A helical membrane pass occupies residues 485 to 505 (FYYGYVFVGCLVAMFLYVFFF). At 506–564 (LPETIGLSLEEIQLLYEEGIKPWKSASWVPPSRRGISSEESKTEKKDWKKFLKFSKNSD) the chain is on the cytoplasmic side. Residues 530-551 (SASWVPPSRRGISSEESKTEKK) form a disordered region. Over residues 541 to 551 (ISSEESKTEKK) the composition is skewed to basic and acidic residues.

It belongs to the major facilitator superfamily. Sugar transporter (TC 2.A.1.1) family.

It localises to the membrane. Probable glucose transporter. This Saccharomyces cerevisiae (strain ATCC 204508 / S288c) (Baker's yeast) protein is Hexose transporter HXT13 (HXT13).